Consider the following 96-residue polypeptide: uncharacterized protein (96 aa).

Residues 38-91 form the HTH cro/C1-type domain; that stretch reads IEQLRKGTGLKIDDFARVLGVSVAMVKEWESRRVKPSSAELKLMRLIQANPALS. The segment at residues 49-68 is a DNA-binding region (H-T-H motif); it reads IDDFARVLGVSVAMVKEWES.

This is an uncharacterized protein from Escherichia coli O157:H7.